The chain runs to 315 residues: Bifunctional protein FolD (315 aa).

Residues 166–168, Ser193, and Ile234 contribute to the NADP(+) site; that span reads GRS.

Belongs to the tetrahydrofolate dehydrogenase/cyclohydrolase family. In terms of assembly, homodimer.

It catalyses the reaction (6R)-5,10-methylene-5,6,7,8-tetrahydrofolate + NADP(+) = (6R)-5,10-methenyltetrahydrofolate + NADPH. The catalysed reaction is (6R)-5,10-methenyltetrahydrofolate + H2O = (6R)-10-formyltetrahydrofolate + H(+). The protein operates within one-carbon metabolism; tetrahydrofolate interconversion. In terms of biological role, catalyzes the oxidation of 5,10-methylenetetrahydrofolate to 5,10-methenyltetrahydrofolate and then the hydrolysis of 5,10-methenyltetrahydrofolate to 10-formyltetrahydrofolate. The sequence is that of Bifunctional protein FolD from Treponema pallidum (strain Nichols).